Consider the following 329-residue polypeptide: Beta-ketoacyl-[acyl-carrier-protein] synthase III (329 aa).

Active-site residues include C113 and H256. Residues 257–261 (QANQR) form an ACP-binding region. The active site involves N286.

This sequence belongs to the thiolase-like superfamily. FabH family. As to quaternary structure, homodimer.

Its subcellular location is the cytoplasm. It carries out the reaction malonyl-[ACP] + acetyl-CoA + H(+) = 3-oxobutanoyl-[ACP] + CO2 + CoA. The protein operates within lipid metabolism; fatty acid biosynthesis. Functionally, catalyzes the condensation reaction of fatty acid synthesis by the addition to an acyl acceptor of two carbons from malonyl-ACP. Catalyzes the first condensation reaction which initiates fatty acid synthesis and may therefore play a role in governing the total rate of fatty acid production. Possesses both acetoacetyl-ACP synthase and acetyl transacylase activities. Its substrate specificity determines the biosynthesis of branched-chain and/or straight-chain of fatty acids. The polypeptide is Beta-ketoacyl-[acyl-carrier-protein] synthase III (Natranaerobius thermophilus (strain ATCC BAA-1301 / DSM 18059 / JW/NM-WN-LF)).